The sequence spans 77 residues: U10-lycotoxin-Ls1a (77 aa).

The first 20 residues, 1 to 20 (MKLIIFTGLVLFAIVSLIEA), serve as a signal peptide directing secretion. Residues 21–26 (EEESGR) constitute a propeptide that is removed on maturation.

It belongs to the neurotoxin 19 (CSTX) family. 09 (U10-Lctx) subfamily. Post-translationally, contains 4 disulfide bonds. As to expression, expressed by the venom gland.

It is found in the secreted. This is U10-lycotoxin-Ls1a from Lycosa singoriensis (Wolf spider).